Reading from the N-terminus, the 315-residue chain is uncharacterized protein (315 aa).

3 helical membrane passes run 18–38 (IWFI…IISG), 202–222 (ILAI…LAGI), and 244–264 (LIYA…VIVL). Residues 288–315 (VCSTGNRSSGSTDQDISTTKQQSQEAVA) form a disordered region.

It is found in the membrane. This is an uncharacterized protein from Saccharomyces cerevisiae (strain ATCC 204508 / S288c) (Baker's yeast).